The following is a 658-amino-acid chain: Carnitine O-palmitoyltransferase 2, mitochondrial (658 aa).

The N-terminal 25 residues, 1–25 (MMPRLLLRDWPRCPSLVLGAPSRPL), are a transit peptide targeting the mitochondrion. The Mitochondrial matrix portion of the chain corresponds to 26 to 178 (SAVSGPAEYL…GLLEPEVFHL (153 aa)). At Lys-69 the chain carries N6-succinyllysine. Lys-79 carries the post-translational modification N6-acetyllysine. Position 85 is an N6-succinyllysine (Lys-85). An intramembrane region (note=Mitochondrial inner membrane) is located at residues 179–208 (NPARSDTDAFKRLIRFVPSSLSWYGAYLVN). Over 209–658 (AYPLDMSQYF…DALEGKAIKT (450 aa)) the chain is Mitochondrial matrix. At Lys-239 the chain carries N6-acetyllysine; alternate. Lys-239 is subject to N6-succinyllysine; alternate. N6-acetyllysine is present on Lys-305. His-372 acts as the Proton acceptor in catalysis. At Lys-418 the chain carries N6-acetyllysine; alternate. Position 418 is an N6-succinyllysine; alternate (Lys-418). An N6-succinyllysine mark is found at Lys-424 and Lys-439. 452-464 (GKEFLKKKKLSPD) is a binding site for CoA. (R)-carnitine-binding residues include Tyr-486, Ser-488, and Thr-499. An N6-acetyllysine; alternate mark is found at Lys-510 and Lys-544. N6-succinyllysine; alternate occurs at positions 510 and 544.

It belongs to the carnitine/choline acetyltransferase family.

It is found in the mitochondrion inner membrane. It catalyses the reaction (R)-carnitine + hexadecanoyl-CoA = O-hexadecanoyl-(R)-carnitine + CoA. The enzyme catalyses octanoyl-CoA + (R)-carnitine = O-octanoyl-(R)-carnitine + CoA. The catalysed reaction is decanoyl-CoA + (R)-carnitine = O-decanoyl-(R)-carnitine + CoA. It carries out the reaction dodecanoyl-CoA + (R)-carnitine = O-dodecanoyl-R-carnitine + CoA. It catalyses the reaction tetradecanoyl-CoA + (R)-carnitine = O-tetradecanoyl-(R)-carnitine + CoA. The enzyme catalyses (R)-carnitine + octadecanoyl-CoA = O-octadecanoyl-(R)-carnitine + CoA. The catalysed reaction is eicosanoyl-CoA + (R)-carnitine = O-eicosanoyl-(R)-carnitine + CoA. It carries out the reaction (9Z)-tetradecenoyl-CoA + (R)-carnitine = O-(9Z)-tetradecenoyl-(R)-carnitine + CoA. It catalyses the reaction (5Z)-tetradecenoyl-CoA + (R)-carnitine = O-(5Z)-tetradecenoyl-(R)-carnitine + CoA. The enzyme catalyses (R)-carnitine + (9Z)-octadecenoyl-CoA = O-(9Z)-octadecenoyl-(R)-carnitine + CoA. The catalysed reaction is 4,8-dimethylnonanoyl-CoA + (R)-carnitine = O-4,8-dimethylnonanoyl-(R)-carnitine + CoA. The protein operates within lipid metabolism; fatty acid beta-oxidation. In terms of biological role, involved in the intramitochondrial synthesis of acylcarnitines from accumulated acyl-CoA metabolites. Reconverts acylcarnitines back into the respective acyl-CoA esters that can then undergo beta-oxidation, an essential step for the mitochondrial uptake of long-chain fatty acids and their subsequent beta-oxidation in the mitochondrion. Active with medium (C8-C12) and long-chain (C14-C18) acyl-CoA esters. This Mus musculus (Mouse) protein is Carnitine O-palmitoyltransferase 2, mitochondrial.